Here is a 943-residue protein sequence, read N- to C-terminus: Translation initiation factor IF-2 (943 aa).

Residues 30-357 (SVKSHSSSVE…KPVTERKFHE (328 aa)) form a disordered region. Composition is skewed to basic and acidic residues over residues 69-82 (PKEE…DKAS), 112-137 (FKAE…DNRN), 145-155 (QGKRHNNDRRN), 163-196 (DHNK…RDNA), and 224-253 (RQSE…EKQQ). Over residues 254–266 (VKVAVQKAAAETK) the composition is skewed to low complexity. A compositionally biased stretch (basic and acidic residues) spans 296–309 (KSRDNRRVNEDGPK). Residues 313-332 (NNKWNNQNQVRNQRNSNWNK) show a composition bias toward low complexity. Residues 445–614 (ERAPVVTIMG…LLVAEVEELK (170 aa)) enclose the tr-type G domain. The G1 stretch occupies residues 454–461 (GHVDHGKT). Residue 454 to 461 (GHVDHGKT) participates in GTP binding. The G2 stretch occupies residues 479–483 (GITQH). The tract at residues 500 to 503 (DTPG) is G3. GTP-binding positions include 500-504 (DTPGH) and 554-557 (NKID). Residues 554–557 (NKID) form a G4 region. A G5 region spans residues 590–592 (SAK).

It belongs to the TRAFAC class translation factor GTPase superfamily. Classic translation factor GTPase family. IF-2 subfamily.

It is found in the cytoplasm. Functionally, one of the essential components for the initiation of protein synthesis. Protects formylmethionyl-tRNA from spontaneous hydrolysis and promotes its binding to the 30S ribosomal subunits. Also involved in the hydrolysis of GTP during the formation of the 70S ribosomal complex. This Streptococcus thermophilus (strain ATCC BAA-250 / LMG 18311) protein is Translation initiation factor IF-2.